The chain runs to 324 residues: NADH-ubiquinone oxidoreductase chain 1 (324 aa).

A run of 8 helical transmembrane segments spans residues 3 to 23 (LLFM…AVAF), 73 to 93 (LLFI…WTPF), 106 to 126 (ILFI…SGWA), 151 to 171 (ALII…AFAI), 175 to 195 (FTWF…STLA), 226 to 246 (LFFL…TIIF), 255 to 275 (TLTT…FLWV), and 295 to 315 (FLPL…SLLF).

The protein belongs to the complex I subunit 1 family.

The protein resides in the mitochondrion inner membrane. It catalyses the reaction a ubiquinone + NADH + 5 H(+)(in) = a ubiquinol + NAD(+) + 4 H(+)(out). Functionally, core subunit of the mitochondrial membrane respiratory chain NADH dehydrogenase (Complex I) that is believed to belong to the minimal assembly required for catalysis. Complex I functions in the transfer of electrons from NADH to the respiratory chain. The immediate electron acceptor for the enzyme is believed to be ubiquinone. This is NADH-ubiquinone oxidoreductase chain 1 (MT-ND1) from Aquarana catesbeiana (American bullfrog).